A 231-amino-acid chain; its full sequence is ATP phosphoribosyltransferase (231 aa).

This sequence belongs to the ATP phosphoribosyltransferase family. Short subfamily. In terms of assembly, heteromultimer composed of HisG and HisZ subunits.

It is found in the cytoplasm. It catalyses the reaction 1-(5-phospho-beta-D-ribosyl)-ATP + diphosphate = 5-phospho-alpha-D-ribose 1-diphosphate + ATP. It functions in the pathway amino-acid biosynthesis; L-histidine biosynthesis; L-histidine from 5-phospho-alpha-D-ribose 1-diphosphate: step 1/9. Its function is as follows. Catalyzes the condensation of ATP and 5-phosphoribose 1-diphosphate to form N'-(5'-phosphoribosyl)-ATP (PR-ATP). Has a crucial role in the pathway because the rate of histidine biosynthesis seems to be controlled primarily by regulation of HisG enzymatic activity. The sequence is that of ATP phosphoribosyltransferase from Psychrobacter arcticus (strain DSM 17307 / VKM B-2377 / 273-4).